Here is a 164-residue protein sequence, read N- to C-terminus: MPKQVVEVLVEGGKATPGPPLGPAIGPLGLNVKQVVDKINEATKDFAGMQVPVKIIVDPVTKQFEIEVGVPPTSQLIKKELGLEKGSGEPKHNIVGNLTMEQVIKIAKMKKDQMLALTLKAAAKEVIGTALSMGVTVEGKDPREVQKEIDEGVYDELFEKAEKE.

Belongs to the universal ribosomal protein uL11 family. As to quaternary structure, part of the ribosomal stalk of the 50S ribosomal subunit. Interacts with L10 and the large rRNA to form the base of the stalk. L10 forms an elongated spine to which L12 dimers bind in a sequential fashion forming a multimeric L10(L12)X complex.

In terms of biological role, forms part of the ribosomal stalk which helps the ribosome interact with GTP-bound translation factors. The sequence is that of Large ribosomal subunit protein uL11 from Pyrococcus furiosus (strain ATCC 43587 / DSM 3638 / JCM 8422 / Vc1).